The following is a 1407-amino-acid chain: DNA-directed RNA polymerase subunit beta' (1407 aa).

Zn(2+) contacts are provided by cysteine 70, cysteine 72, cysteine 85, and cysteine 88. Aspartate 460, aspartate 462, and aspartate 464 together coordinate Mg(2+). Position 972 is an N6-acetyllysine (lysine 972).

It belongs to the RNA polymerase beta' chain family. The RNAP catalytic core consists of 2 alpha, 1 beta, 1 beta' and 1 omega subunit. When a sigma factor is associated with the core the holoenzyme is formed, which can initiate transcription. Mg(2+) serves as cofactor. It depends on Zn(2+) as a cofactor.

The catalysed reaction is RNA(n) + a ribonucleoside 5'-triphosphate = RNA(n+1) + diphosphate. Its function is as follows. DNA-dependent RNA polymerase catalyzes the transcription of DNA into RNA using the four ribonucleoside triphosphates as substrates. This chain is DNA-directed RNA polymerase subunit beta', found in Escherichia coli O6:K15:H31 (strain 536 / UPEC).